Here is a 599-residue protein sequence, read N- to C-terminus: Putative sensor histidine kinase NtrY-like (599 aa).

The next 4 helical transmembrane spans lie at 17–37 (VLIFTLAIAAIIFACATFYVI), 44–64 (FSTIIGFLLVDLAIFLILGVL), 85–105 (IVIAFSLVAAIPTIIVSVFSV), and 285–305 (IMFIFIALLLLFVAISFGVIF). The region spanning 307-361 (AKIVKPIKKLVTATDKVKDGDLTVQVPENEVDKDEIGTLYAAFNRMIKQLSRQQR) is the HAMP domain. The region spanning 378 to 589 (KVAHEIKNPL…IIDIKFDLKK (212 aa)) is the Histidine kinase domain. H381 carries the phosphohistidine; by autocatalysis modification.

It is found in the cell membrane. The enzyme catalyses ATP + protein L-histidine = ADP + protein N-phospho-L-histidine.. Its function is as follows. Member of the two-component regulatory system RF_0427/RF_0895. The protein is Putative sensor histidine kinase NtrY-like of Rickettsia felis (strain ATCC VR-1525 / URRWXCal2) (Rickettsia azadi).